The sequence spans 275 residues: Light-independent protochlorophyllide reductase iron-sulfur ATP-binding protein (275 aa).

ATP contacts are provided by residues 12–17 and K41; that span reads GIGKST. Position 16 (S16) interacts with Mg(2+). 2 residues coordinate [4Fe-4S] cluster: C97 and C131. 182–183 serves as a coordination point for ATP; sequence NR.

This sequence belongs to the NifH/BchL/ChlL family. In terms of assembly, homodimer. Protochlorophyllide reductase is composed of three subunits; BchL, BchN and BchB. Requires [4Fe-4S] cluster as cofactor.

The catalysed reaction is chlorophyllide a + oxidized 2[4Fe-4S]-[ferredoxin] + 2 ADP + 2 phosphate = protochlorophyllide a + reduced 2[4Fe-4S]-[ferredoxin] + 2 ATP + 2 H2O. It functions in the pathway porphyrin-containing compound metabolism; bacteriochlorophyll biosynthesis (light-independent). Functionally, component of the dark-operative protochlorophyllide reductase (DPOR) that uses Mg-ATP and reduced ferredoxin to reduce ring D of protochlorophyllide (Pchlide) to form chlorophyllide a (Chlide). This reaction is light-independent. The L component serves as a unique electron donor to the NB-component of the complex, and binds Mg-ATP. This is Light-independent protochlorophyllide reductase iron-sulfur ATP-binding protein from Chlorobium phaeobacteroides (strain DSM 266 / SMG 266 / 2430).